Consider the following 498-residue polypeptide: MRINPTTSGSEVSTLEKKKPGRVIQIIGPVLDVAFPPGKMPNIYNALVVQDRDSVGQPINVACEVQQLLGNNRVRAVAMSATDGLTRGMEVIDTGAPISVPVGGATLGRIFNVLGEPVDNLGPVDTNTTSPIHRSAPAFIQLDTKLSIFETGIKVVDLLAPYRRGGKIGLFGGAGVGKTVLIMELINNIAKAHGGVSVFGGVGERTREGNDLYMEMKESGVINEENIAESKVALVYGQMNEPPGARMRVGLTALTMAEYFRDVNEQDVLLFIDNIFRFVQAGSEVSALLGRMPSAVGYQPTLSTEMGSLQERITSTKEGSITSIQAVYVPADDLTDPAPATTFAHLDATTVLSRGLAAKGIYPAVDPLDSTSTMLQPRIVGEEHYETAQRVKQTLQRYKELQDIIAILGLDELSEEDRLLVARARKIERFLSQPFFVAEVFTGSPGKYVGLAETIRGFQLILSGELDGLPEQAFYLVGNIDEATAKAMNLEMESNLKK.

172-179 contributes to the ATP binding site; it reads GGAGVGKT.

The protein belongs to the ATPase alpha/beta chains family. As to quaternary structure, F-type ATPases have 2 components, CF(1) - the catalytic core - and CF(0) - the membrane proton channel. CF(1) has five subunits: alpha(3), beta(3), gamma(1), delta(1), epsilon(1). CF(0) has four main subunits: a(1), b(1), b'(1) and c(9-12).

The protein resides in the plastid. It is found in the chloroplast thylakoid membrane. The catalysed reaction is ATP + H2O + 4 H(+)(in) = ADP + phosphate + 5 H(+)(out). Produces ATP from ADP in the presence of a proton gradient across the membrane. The catalytic sites are hosted primarily by the beta subunits. In Nicotiana tomentosiformis (Tobacco), this protein is ATP synthase subunit beta, chloroplastic.